A 98-amino-acid polypeptide reads, in one-letter code: MIPDPRDIILRPVVSEKSYGLLDENVYTFIVRPDANKTQIKLAVQKIFNVRVTRVNTINRAGKRKRTKHGWGHRSATKRALVSLAPGDSIEIFGGPGA.

The protein belongs to the universal ribosomal protein uL23 family. As to quaternary structure, part of the 50S ribosomal subunit. Contacts protein L29, and trigger factor when it is bound to the ribosome.

Functionally, one of the early assembly proteins it binds 23S rRNA. One of the proteins that surrounds the polypeptide exit tunnel on the outside of the ribosome. Forms the main docking site for trigger factor binding to the ribosome. The sequence is that of Large ribosomal subunit protein uL23 from Parafrankia sp. (strain EAN1pec).